We begin with the raw amino-acid sequence, 673 residues long: RAS guanyl-releasing protein 4 (673 aa).

Basic residues-rich tracts occupy residues 1–10 (MNRKDSKRKS) and 20–32 (GRGRPRQARRHKT). Disordered regions lie at residues 1–34 (MNRKDSKRKSHQECPVKTGGRGRPRQARRHKTCP) and 162–188 (QSLGDFSSRLSPGGPGPPHPMSSPGLG). The N-terminal Ras-GEF domain maps to 49–172 (GMLNEGGCSE…SLGDFSSRLS (124 aa)). Residues 201–432 (ETGELAEHLT…YELSYAREPR (232 aa)) enclose the Ras-GEF domain. Residues 466 to 501 (HVEQLVESVFKNYDPDGRGTISQEDFERLSGNFPFA) form the EF-hand domain. The Phorbol-ester/DAG-type zinc-finger motif lies at 540 to 590 (LHTFQEVTFRKPTFCNSCSGFLWGVTKQGYRCRDCGLCCHRHCRDQVKVEC). Disordered stretches follow at residues 593-618 (RPGAKGDASPPEAPVPPTPVPQASCG) and 638-673 (RHAWTQTESPHPSWEPETVPLPAKASPPTESSKLNS). The span at 603–612 (PEAPVPPTPV) shows a compositional bias: pro residues.

This sequence belongs to the RASGRP family.

It localises to the cytoplasm. The protein resides in the cell membrane. Its function is as follows. Functions as a cation- and diacylglycerol (DAG)-regulated nucleotide exchange factor activating Ras through the exchange of bound GDP for GTP. In neutrophils, participates in a phospholipase C-activating N-formyl peptide-activated GPCR (G protein-coupled receptor) signaling pathway by promoting Ras-mediated activation of PIK3CG/PI3Kgamma to promote neutrophil functional responses. In CD117(+) dendritic cells and mast cells, participates in an lipopolysaccharide (LPS)-activated signaling pathway that stimulates the production of interferon-gamma and other pro-inflammatory cytokines by natural killer (NK) cells. May function in mast cell differentiation. Does not appear to be required for the development of B-cells, DC-cells, T-cells, or NK-cells. The polypeptide is RAS guanyl-releasing protein 4 (RASGRP4) (Bos taurus (Bovine)).